Here is a 466-residue protein sequence, read N- to C-terminus: UDP-N-acetylmuramoylalanine--D-glutamate ligase (466 aa).

124-130 contributes to the ATP binding site; sequence GSDGKTT.

This sequence belongs to the MurCDEF family.

Its subcellular location is the cytoplasm. The catalysed reaction is UDP-N-acetyl-alpha-D-muramoyl-L-alanine + D-glutamate + ATP = UDP-N-acetyl-alpha-D-muramoyl-L-alanyl-D-glutamate + ADP + phosphate + H(+). It functions in the pathway cell wall biogenesis; peptidoglycan biosynthesis. Cell wall formation. Catalyzes the addition of glutamate to the nucleotide precursor UDP-N-acetylmuramoyl-L-alanine (UMA). The polypeptide is UDP-N-acetylmuramoylalanine--D-glutamate ligase (Acetivibrio thermocellus (strain ATCC 27405 / DSM 1237 / JCM 9322 / NBRC 103400 / NCIMB 10682 / NRRL B-4536 / VPI 7372) (Clostridium thermocellum)).